A 335-amino-acid chain; its full sequence is MGSASPGLSSVSPSHLLLPPDTVSRTGLEKAAAGAVGLERRDWSPSPPATPEQGLSAFYLSYFDMLYPEDSSWAAKAPGASSREEPPEEPEQCPVIDSQAPAGSLDLVPGGLTLEEHSLEQVQSMVVGEVLKDIETACKLLNITADPMDWSPSNVQKWLLWTEHQYRLPPMGKAFQELAGKELCAMSEEQFRQRSPLGGDVLHAHLDIWKSAAWMKERTSPGAIHYCASTSEESWTDSEVDSSCSGQPIHLWQFLKELLLKPHSYGRFIRWLNKEKGIFKIEDSAQVARLWGIRKNRPAMNYDKLSRSIRQYYKKGIIRKPDISQRLVYQFVHPI.

Over residues 1–20 (MGSASPGLSSVSPSHLLLPP) the composition is skewed to low complexity. Disordered regions lie at residues 1–25 (MGSA…TVSR) and 75–100 (AKAP…DSQA). The PNT domain maps to 129-213 (EVLKDIETAC…AHLDIWKSAA (85 aa)). The segment at residues 249–332 (IHLWQFLKEL…ISQRLVYQFV (84 aa)) is a DNA-binding region (ETS).

Belongs to the ETS family. In terms of assembly, interacts with the DNA-binding domain of the androgen receptor. Interacts with NKX3-1. Expressed in a very restricted set of primarily hormone-regulated epithelial tissues with particularly high expression in the prostate gland. Significantly lower expression is seen in other hormone regulated tissues such as mammary gland, salivary gland, and ovary. Expressed in prostate carcinoma cells.

The protein resides in the nucleus. May function as an androgen-independent transactivator of the prostate-specific antigen (PSA) promoter. Binds to 5'-GGAT-3' DNA sequences. May play a role in the regulation of the prostate gland and/or prostate cancer development. Acts as a transcriptional activator for SERPINB5 promoter. In Homo sapiens (Human), this protein is SAM pointed domain-containing Ets transcription factor (SPDEF).